Here is a 178-residue protein sequence, read N- to C-terminus: Co-chaperone protein p23-1 (178 aa).

The 90-residue stretch at 2–91 (SRHPTVKWAQ…AESKWWNRLT (90 aa)) folds into the CS domain. Acidic residues-rich tracts occupy residues 112 to 126 (DDED…DFGD) and 136 to 155 (DTDE…EGET). The tract at residues 112-178 (DDEDKGGEGD…DEEGVNAKKD (67 aa)) is disordered. Basic and acidic residues predominate over residues 157–178 (AETKEKKIDGEKDEEGVNAKKD).

This sequence belongs to the p23/wos2 family. In terms of assembly, interacts with HSP90 in an ATP-dependent manner.

Functionally, acts as a co-chaperone for HSP90. This is Co-chaperone protein p23-1 from Brassica napus (Rape).